The sequence spans 250 residues: 5'-nucleotidase SurE (250 aa).

Residues Asp8, Asp9, Ser39, and Asn91 each contribute to the a divalent metal cation site.

This sequence belongs to the SurE nucleotidase family. It depends on a divalent metal cation as a cofactor.

It is found in the cytoplasm. It carries out the reaction a ribonucleoside 5'-phosphate + H2O = a ribonucleoside + phosphate. Its function is as follows. Nucleotidase that shows phosphatase activity on nucleoside 5'-monophosphates. The polypeptide is 5'-nucleotidase SurE (Leptospira borgpetersenii serovar Hardjo-bovis (strain JB197)).